Reading from the N-terminus, the 500-residue chain is Cysteine-rich secretory protein LCCL domain-containing 1 (500 aa).

Positions 1–23 (MMCKAQEWLRVTALLFVARAVPA) are cleaved as a signal peptide. Positions 66 to 206 (LDLHNKLRSQ…PKAVYLVCNY (141 aa)) constitute an SCP domain. Positions 258 to 281 (EIERQQSQVHDTHVRTRSDDSDRN) are disordered. LCCL domains lie at 289-384 (MSQI…ANSF) and 390-492 (TVQA…TGGK). 4 disulfides stabilise this stretch: C295–C313, C317–C337, C396–C418, and C422–C445.

It belongs to the CRISP family.

It is found in the secreted. The polypeptide is Cysteine-rich secretory protein LCCL domain-containing 1 (Crispld1) (Mus musculus (Mouse)).